We begin with the raw amino-acid sequence, 418 residues long: Beta-arrestin-1 (418 aa).

The segment at 1-163 is interaction with SRC; the sequence is MGDKGTRVFK…LEEKIHKRNS (163 aa). An interaction with CHRM2 region spans residues 45-86; sequence PEYLKERRVYVTLTCAFRYGREDLDVLGLTFRKDLFVANVQS. Residue Y47 is modified to Phosphotyrosine. Positions 250, 255, 324, and 326 each coordinate 1D-myo-inositol hexakisphosphate. Positions 318 to 418 are interaction with TRAF6; sequence IVSYKVKVKL…GTGSPRLNDR (101 aa). The disordered stretch occupies residues 353–375; the sequence is HPKPKEEPPHREVPEHETPVDTN. The segment covering 355–371 has biased composition (basic and acidic residues); it reads KPKEEPPHREVPEHETP. A [DE]-X(1,2)-F-X-X-[FL]-X-X-X-R motif motif is present at residues 385–395; that stretch reads DIVFEDFARQR. The disordered stretch occupies residues 397–418; the sequence is KGMKDDKEEEEDGTGSPRLNDR. S412 bears the Phosphoserine; by GRK5 mark.

It belongs to the arrestin family. As to quaternary structure, monomer. Homodimer. Homooligomer; the self-association is mediated by InsP6-binding. Heterooligomer with ARRB2; the association is mediated by InsP6-binding. Interacts with ADRB2 (phosphorylated). Interacts with CHRM2 (phosphorylated). Interacts with LHCGR. Interacts with CYTH2 and CASR. Interacts with AP2B1 (dephosphorylated at 'Tyr-737'); phosphorylation of AP2B1 at 'Tyr-737' disrupts the interaction. Interacts (dephosphorylated at Ser-412) with CLTC. Interacts with CCR2 and GRK2. Interacts with CRR5. Interacts with PTAFR (phosphorylated on serine residues). Interacts with CLTC and MAP2K3. Interacts with CREB1. Interacts with TRAF6. Interacts with IGF1R and MDM2. Interacts with C5AR1. Interacts with PDE4D. Interacts with SRC (via the SH3 domain and the protein kinase domain); the interaction is independent of the phosphorylation state of SRC C-terminus. Interacts with TACR1. Interacts with RAF1. Interacts with CHUK, IKBKB and MAP3K14. Interacts with DVL1; the interaction is enhanced by phosphorylation of DVL1. Interacts with DVL2; the interaction is enhanced by phosphorylation of DVL2. Interacts with IGF1R. Associates with MAP kinase p38. Part of a MAPK signaling complex consisting of TACR1, ARRB1, SRC, MAPK1 (activated) and MAPK3 (activated). Part of a MAPK signaling complex consisting of F2RL1, ARRB1, RAF1, MAPK1 (activated) and MAPK3 (activated). Interacts with GPR143. Interacts with MAP2K4/MKK4. Interacts with HCK and CXCR1 (phosphorylated). Interacts with ACKR3 and ACKR4. Interacts with ARRDC1; the interaction is direct. Interacts with GPR61, GPR62 and GPR135. In terms of processing, constitutively phosphorylated at Ser-412 in the cytoplasm. At the plasma membrane, is rapidly dephosphorylated, a process that is required for clathrin binding and ADRB2 endocytosis but not for ADRB2 binding and desensitization. Once internalized, is rephosphorylated. Post-translationally, the ubiquitination status appears to regulate the formation and trafficking of beta-arrestin-GPCR complexes and signaling. Ubiquitination appears to occur GPCR-specific. Ubiquitinated by MDM2; the ubiquitination is required for rapid internalization of ADRB2. Deubiquitinated by USP33; the deubiquitination leads to a dissociation of the beta-arrestin-GPCR complex. Stimulation of a class A GPCR, such as ADRB2, induces transient ubiquitination and subsequently promotes association with USP33. Beta-arrestin 1A is found in cortex, cerebellum, striatum, pineal gland, retina and heart. Beta-arrestin 1B is found in spleen, lung, pituitary and kidney.

It localises to the cytoplasm. The protein resides in the nucleus. The protein localises to the cell membrane. Its subcellular location is the membrane. It is found in the clathrin-coated pit. It localises to the cell projection. The protein resides in the pseudopodium. The protein localises to the cytoplasmic vesicle. Functions in regulating agonist-mediated G-protein coupled receptor (GPCR) signaling by mediating both receptor desensitization and resensitization processes. During homologous desensitization, beta-arrestins bind to the GPRK-phosphorylated receptor and sterically preclude its coupling to the cognate G-protein; the binding appears to require additional receptor determinants exposed only in the active receptor conformation. The beta-arrestins target many receptors for internalization by acting as endocytic adapters (CLASPs, clathrin-associated sorting proteins) and recruiting the GPRCs to the adapter protein 2 complex 2 (AP-2) in clathrin-coated pits (CCPs). However, the extent of beta-arrestin involvement appears to vary significantly depending on the receptor, agonist and cell type. Internalized arrestin-receptor complexes traffic to intracellular endosomes, where they remain uncoupled from G-proteins. Two different modes of arrestin-mediated internalization occur. Class A receptors, like ADRB2, OPRM1, ENDRA, D1AR and ADRA1B dissociate from beta-arrestin at or near the plasma membrane and undergo rapid recycling. Class B receptors, like AVPR2, AGTR1, NTSR1, TRHR and TACR1 internalize as a complex with arrestin and traffic with it to endosomal vesicles, presumably as desensitized receptors, for extended periods of time. Receptor resensitization then requires that receptor-bound arrestin is removed so that the receptor can be dephosphorylated and returned to the plasma membrane. Involved in internalization of P2RY4 and UTP-stimulated internalization of P2RY2. Involved in phosphorylation-dependent internalization of OPRD1 ands subsequent recycling. Involved in the degradation of cAMP by recruiting cAMP phosphodiesterases to ligand-activated receptors. Beta-arrestins function as multivalent adapter proteins that can switch the GPCR from a G-protein signaling mode that transmits short-lived signals from the plasma membrane via small molecule second messengers and ion channels to a beta-arrestin signaling mode that transmits a distinct set of signals that are initiated as the receptor internalizes and transits the intracellular compartment. Acts as a signaling scaffold for MAPK pathways such as MAPK1/3 (ERK1/2). ERK1/2 activated by the beta-arrestin scaffold is largely excluded from the nucleus and confined to cytoplasmic locations such as endocytic vesicles, also called beta-arrestin signalosomes. Recruits c-Src/SRC to ADRB2 resulting in ERK activation. GPCRs for which the beta-arrestin-mediated signaling relies on both ARRB1 and ARRB2 (codependent regulation) include ADRB2, F2RL1 and PTH1R. For some GPCRs the beta-arrestin-mediated signaling relies on either ARRB1 or ARRB2 and is inhibited by the other respective beta-arrestin form (reciprocal regulation). Inhibits ERK1/2 signaling in AGTR1- and AVPR2-mediated activation (reciprocal regulation). Is required for SP-stimulated endocytosis of NK1R and recruits c-Src/SRC to internalized NK1R resulting in ERK1/2 activation, which is required for the antiapoptotic effects of SP. Is involved in proteinase-activated F2RL1-mediated ERK activity. Acts as a signaling scaffold for the AKT1 pathway. Is involved in alpha-thrombin-stimulated AKT1 signaling. Is involved in IGF1-stimulated AKT1 signaling leading to increased protection from apoptosis. Involved in activation of the p38 MAPK signaling pathway and in actin bundle formation. Involved in F2RL1-mediated cytoskeletal rearrangement and chemotaxis. Involved in AGTR1-mediated stress fiber formation by acting together with GNAQ to activate RHOA. Appears to function as signaling scaffold involved in regulation of MIP-1-beta-stimulated CCR5-dependent chemotaxis. Involved in attenuation of NF-kappa-B-dependent transcription in response to GPCR or cytokine stimulation by interacting with and stabilizing CHUK. May serve as nuclear messenger for GPCRs. Involved in OPRD1-stimulated transcriptional regulation by translocating to CDKN1B and FOS promoter regions and recruiting EP300 resulting in acetylation of histone H4. Involved in regulation of LEF1 transcriptional activity via interaction with DVL1 and/or DVL2 Also involved in regulation of receptors other than GPCRs. Involved in Toll-like receptor and IL-1 receptor signaling through the interaction with TRAF6 which prevents TRAF6 autoubiquitination and oligomerization required for activation of NF-kappa-B and JUN. Involved in IL8-mediated granule release in neutrophils. Binds phosphoinositides. Binds inositol hexakisphosphate (InsP6). Required for atypical chemokine receptor ACKR2-induced RAC1-LIMK1-PAK1-dependent phosphorylation of cofilin (CFL1) and for the up-regulation of ACKR2 from endosomal compartment to cell membrane, increasing its efficiency in chemokine uptake and degradation. Involved in the internalization of the atypical chemokine receptor ACKR3. Negatively regulates the NOTCH signaling pathway by mediating the ubiquitination and degradation of NOTCH1 by ITCH. Participates in the recruitment of the ubiquitin-protein ligase to the receptor. The protein is Beta-arrestin-1 (ARRB1) of Bos taurus (Bovine).